Here is a 481-residue protein sequence, read N- to C-terminus: Arylsulfatase (481 aa).

Residues aspartate 11, glutamine 12, and cysteine 51 each contribute to the Ca(2+) site. Catalysis depends on cysteine 51, which acts as the Nucleophile. Residue cysteine 51 is modified to 3-oxoalanine (Cys). Histidine 102 is an active-site residue. Ca(2+)-binding residues include aspartate 302 and histidine 303.

The protein belongs to the sulfatase family. Requires Ca(2+) as cofactor. The conversion to 3-oxoalanine (also known as C-formylglycine, FGly), of a serine or cysteine residue in prokaryotes and of a cysteine residue in eukaryotes, is critical for catalytic activity.

The enzyme catalyses an aryl sulfate + H2O = a phenol + sulfate + H(+). In terms of biological role, has sulfatase activity toward para-nitrophenyl sulfate, which is increased in presence of calcium ion. The protein is Arylsulfatase of Clostridium perfringens (strain 13 / Type A).